Reading from the N-terminus, the 323-residue chain is uncharacterized protein (323 aa).

Disordered stretches follow at residues 185–214 (AELMKSEDSPEKDEETLRREERKQKEGSSW) and 271–294 (GNIISQKDNPPKSDSDDEDDYEKL).

Belongs to the IGBP1/TAP42 family.

This is an uncharacterized protein from Schizosaccharomyces pombe (strain 972 / ATCC 24843) (Fission yeast).